The sequence spans 421 residues: Nucleotide exchange factor SIL1 (421 aa).

The N-terminal stretch at 1–19 (MVRILPIILSALSSKLVAS) is a signal peptide. N-linked (GlcNAc...) asparagine glycans are attached at residues N105, N181, N215, N233, N315, and N333. The short motif at 418–421 (RDEL) is the Prevents secretion from ER element.

Belongs to the SIL1 family. Interacts with KAR2. Post-translationally, N-glycosylated.

The protein resides in the endoplasmic reticulum lumen. Required for protein translocation and folding in the endoplasmic reticulum (ER). Functions as a nucleotide exchange factor for the ER lumenal chaperone KAR2. This Saccharomyces cerevisiae (strain ATCC 204508 / S288c) (Baker's yeast) protein is Nucleotide exchange factor SIL1 (SIL1).